Here is a 243-residue protein sequence, read N- to C-terminus: Anti-H(O) lectin 1 (243 aa).

Asparagine 10 is a glycosylation site (N-linked (GlcNAc...) asparagine; partial). Asparagine 116 carries an N-linked (GlcNAc...) asparagine glycan. 2 residues coordinate Mn(2+): glutamate 126 and aspartate 128. Positions 128, 135, and 138 each coordinate Ca(2+). Mn(2+) contacts are provided by aspartate 138 and histidine 143.

Belongs to the leguminous lectin family.

L-fucose specific lectin. This Ulex europaeus (Furze) protein is Anti-H(O) lectin 1.